We begin with the raw amino-acid sequence, 214 residues long: Ras-related protein RABH1c (214 aa).

16–23 (GDQSVGKT) provides a ligand contact to GTP. The Effector region signature appears at 38 to 46 (YQPTIGIDF). Residues 64–68 (DTAGQ), 123–126 (NKTD), and 153–154 (SA) each bind GTP. The segment at 194-214 (TSNSSQGEQQGGAGGGGGCSC) is disordered. The span at 202 to 214 (QQGGAGGGGGCSC) shows a compositional bias: gly residues. S-geranylgeranyl cysteine attachment occurs at residues Cys212 and Cys214. At Cys214 the chain carries Cysteine methyl ester.

This sequence belongs to the small GTPase superfamily. Rab family. In terms of assembly, interacts with the C-terminus of GC5, but not with GC3.

It localises to the golgi apparatus membrane. The protein resides in the cytoplasm. The protein localises to the cytosol. Functionally, protein transport. Regulator of membrane traffic from the Golgi apparatus towards the endoplasmic reticulum (ER). The sequence is that of Ras-related protein RABH1c (RABH1C) from Arabidopsis thaliana (Mouse-ear cress).